A 546-amino-acid polypeptide reads, in one-letter code: Probable sucrose-6-phosphate hydrolase (546 aa).

Substrate-binding positions include Leu-105–Asp-108, Gln-124, Phe-167–Ser-168, Arg-228–Asp-229, and Glu-283. Asp-108 is an active-site residue.

This sequence belongs to the glycosyl hydrolase 32 family.

It is found in the cytoplasm. The enzyme catalyses Hydrolysis of terminal non-reducing beta-D-fructofuranoside residues in beta-D-fructofuranosides.. The protein operates within glycan biosynthesis; sucrose metabolism. Functionally, enables the bacterium to metabolize sucrose as a sole carbon source. This is Probable sucrose-6-phosphate hydrolase from Vibrio cholerae.